Reading from the N-terminus, the 311-residue chain is Salutaridine reductase (311 aa).

Residue 17 to 40 (VTGGNKGIGFEICKQLSSSGIMVV) participates in NADP(+) binding. Ser-180 is a binding site for substrate. Tyr-236 acts as the Proton acceptor in catalysis.

Belongs to the short-chain dehydrogenases/reductases (SDR) family.

The catalysed reaction is (7S)-salutaridinol + NADP(+) = salutaridine + NADPH + H(+). With respect to regulation, subject to substrate inhibition at salutaridine concentrations higher than 20 to 30 uM. In terms of biological role, involved in biosynthesis of morphinan-type benzylisoquinoline alkaloids. Catalyzes the stereospecific conversion of salutaridine to salutaridinol. This is Salutaridine reductase from Papaver bracteatum (Great scarlet poppy).